A 174-amino-acid chain; its full sequence is uncharacterized protein (174 aa).

A disordered region spans residues 137–174; sequence TNVTLGDDTPKSYDAPVSAIPPPATATTANATGVKPLE.

This is an uncharacterized protein from Acanthamoeba polyphaga (Amoeba).